Reading from the N-terminus, the 74-residue chain is uncharacterized protein (74 aa).

This is an uncharacterized protein from Staphylococcus aureus.